We begin with the raw amino-acid sequence, 300 residues long: 2-methylisocitrate lyase (300 aa).

53–55 (SGD) is a substrate binding site. Mg(2+)-binding residues include D92 and D94. Residues 129–130 (CG), R162, E192, 214–216 (NMT), R245, and R274 each bind substrate.

This sequence belongs to the isocitrate lyase/PEP mutase superfamily. Methylisocitrate lyase family. The cofactor is Mg(2+).

The catalysed reaction is 3-hydroxybutane-1,2,3-tricarboxylate = pyruvate + succinate. Functionally, involved in the methylcitric acid cycle. Catalyzes the cleavage of 2-methylisocitrate to yield pyruvate and succinate. The sequence is that of 2-methylisocitrate lyase from Halalkalibacterium halodurans (strain ATCC BAA-125 / DSM 18197 / FERM 7344 / JCM 9153 / C-125) (Bacillus halodurans).